Here is a 257-residue protein sequence, read N- to C-terminus: Ribosome maturation factor RimP (257 aa).

The interval 182-257 (LRRGGPPAAD…SRLKDRDSLH (76 aa)) is disordered. A compositionally biased stretch (acidic residues) spans 191-205 (DEADEAEEAEDEEVA). The span at 224–236 (KASPAAKPQKQAR) shows a compositional bias: low complexity.

The protein belongs to the RimP family.

It localises to the cytoplasm. Functionally, required for maturation of 30S ribosomal subunits. The protein is Ribosome maturation factor RimP of Methylobacterium radiotolerans (strain ATCC 27329 / DSM 1819 / JCM 2831 / NBRC 15690 / NCIMB 10815 / 0-1).